Here is a 497-residue protein sequence, read N- to C-terminus: MVFASAGAAVSGAILALDLGTTGIRALLFDPSGAVAAGAYREVPQIYPQPGWVEHDPQTIWQLTCEVVAEVQAQSAARIAAVGLTNQRETCLLWDAATGTPHGNAIVWQDRRTAALCQKLRAEGWEAPIRQRTGLVIDAYFSATKLAWLLAHRRPYYPGLKAGTIDSWIIWKLTGGRVHATDTSNASRTMLFNLHTRDWDPELLELLAIPAEILPAIKPSLGVLAETDVRVLGYSAPIAGILGDQQAALFAHGCDRPGLVKCTYGTGSFLVAHTGDRPIRSRHQLLTTVAWSDRTSTGYALEGALFTTGASVQWLRDGLGIIETADESEALAASVPDSGGVYFVPALSGLGAPHWDMGARGLLIGLTRGSGRGQIARAVLEAIAFQTREVTDALAADMGTPLTRLKVDGGAVRNNLLMQLQADVLGVPVERPQLIDTTAQGAAFAAGLGTGFWGDYAELVAARPIDRVFESGERQLVLQAHYAVWQRAVERSREWVR.

Thr21 lines the ADP pocket. ATP-binding residues include Thr21 and Thr22. Thr21 contacts sn-glycerol 3-phosphate. Arg25 lines the ADP pocket. 4 residues coordinate sn-glycerol 3-phosphate: Arg88, Glu89, Tyr140, and Asp244. Residues Arg88, Glu89, Tyr140, Asp244, and Gln245 each contribute to the glycerol site. Residues Thr266 and Gly309 each contribute to the ADP site. ATP contacts are provided by Thr266, Gly309, Gln313, and Gly410. Gly410 and Asn414 together coordinate ADP.

The protein belongs to the FGGY kinase family.

It carries out the reaction glycerol + ATP = sn-glycerol 3-phosphate + ADP + H(+). It functions in the pathway polyol metabolism; glycerol degradation via glycerol kinase pathway; sn-glycerol 3-phosphate from glycerol: step 1/1. Inhibited by fructose 1,6-bisphosphate (FBP). Its function is as follows. Key enzyme in the regulation of glycerol uptake and metabolism. Catalyzes the phosphorylation of glycerol to yield sn-glycerol 3-phosphate. The chain is Glycerol kinase from Gloeobacter violaceus (strain ATCC 29082 / PCC 7421).